The sequence spans 167 residues: MERFVVTAPPARNRSKTALYVTPLDRVTEFGGELHEDGGKLFCTSCNVVLNHVRKSAISDHLKSKTHTKRKAEFEEQNVRKKQRPLTASLQCNSTAQTEKVSVIQDFVKMCLEANIPLEKADHPAVRAFLSRHVKNGGSIPKSDQLRRAYLPDGYENENQLLNSQDC.

Serine 56 bears the Phosphoserine mark. The short motif at 80 to 84 (RKKQR) is the Nuclear localization signal element. Serine 164 bears the Phosphoserine mark.

As to expression, ubiquitous. Highly expressed in placenta, thymus, lymph nodes, cerebellum and cerebral cortex. Low expression in other regions of the brain.

The protein localises to the nucleus. Functionally, binds to nonmethylated 5'-d(CGG)(n)-3' trinucleotide repeats in the FMR1 promoter. May play a role in regulating FMR1 promoter. This Homo sapiens (Human) protein is CGG triplet repeat-binding protein 1 (CGGBP1).